The primary structure comprises 140 residues: L-fucose mutarotase (140 aa).

His-22 (proton donor) is an active-site residue. Residues Asp-30, Arg-107, and 129–131 contribute to the substrate site; that span reads YGN.

Belongs to the RbsD / FucU family. FucU mutarotase subfamily. In terms of assembly, homodecamer.

It localises to the cytoplasm. It catalyses the reaction alpha-L-fucose = beta-L-fucose. It functions in the pathway carbohydrate metabolism; L-fucose metabolism. Functionally, involved in the anomeric conversion of L-fucose. The sequence is that of L-fucose mutarotase from Klebsiella pneumoniae subsp. pneumoniae (strain ATCC 700721 / MGH 78578).